The chain runs to 258 residues: Exosome complex component Rrp41 (258 aa).

The protein belongs to the RNase PH family. Rrp41 subfamily. As to quaternary structure, component of the archaeal exosome complex. Forms a hexameric ring-like arrangement composed of 3 Rrp41-Rrp42 heterodimers. The hexameric ring associates with a trimer of Rrp4 and/or Csl4 subunits.

The protein localises to the cytoplasm. Its function is as follows. Catalytic component of the exosome, which is a complex involved in RNA degradation. Has 3'-&gt;5' exoribonuclease activity. Can also synthesize heteromeric RNA-tails. The chain is Exosome complex component Rrp41 from Archaeoglobus fulgidus (strain ATCC 49558 / DSM 4304 / JCM 9628 / NBRC 100126 / VC-16).